Reading from the N-terminus, the 312-residue chain is Bifunctional pinoresinol-lariciresinol reductase (312 aa).

Residues 10–16, arginine 35, and lysine 44 each bind NADP(+); that span reads GGTGYIG. Lysine 136 acts as the Proton acceptor in catalysis. Residue arginine 140 participates in NADP(+) binding. Histidine 268 provides a ligand contact to substrate.

The protein belongs to the NmrA-type oxidoreductase family. Isoflavone reductase subfamily. As to quaternary structure, dimer. Expressed in seed coats, but not in embryos, leaves, stems and roots.

Reductase involved in lignan biosynthesis. Catalyzes the sequential conversion of pinoresinol into lariciresinol and of lariciresinol into secoisolariciresinol. Abstracts the 4R-hydride from the NADPH cofactor during catalysis. This Linum usitatissimum (Flax) protein is Bifunctional pinoresinol-lariciresinol reductase.